A 292-amino-acid polypeptide reads, in one-letter code: Putative phosphatase MPN_381 (292 aa).

The active-site Nucleophile is aspartate 11. Aspartate 11 serves as a coordination point for Mg(2+). Phosphate is bound at residue leucine 12. Aspartate 13 serves as a coordination point for Mg(2+). Phosphate is bound by residues 60-61 and lysine 217; that span reads TG. Aspartate 242 is a Mg(2+) binding site. Asparagine 245 is a binding site for phosphate.

This sequence belongs to the HAD-like hydrolase superfamily. Cof family. The cofactor is Mg(2+).

The polypeptide is Putative phosphatase MPN_381 (Mycoplasma pneumoniae (strain ATCC 29342 / M129 / Subtype 1) (Mycoplasmoides pneumoniae)).